The chain runs to 223 residues: Na(+)-translocating NADH-quinone reductase subunit D (223 aa).

The next 5 helical transmembrane spans lie at 42-62 (TVMAIALTLVTGFSNLFISMI), 66-86 (IPSSIRMIVQMVIIASLVIVV), 103-123 (VFVGLIITNCIVMGRAEAFAM), 131-151 (FFDGIGNGLGYSAMLLVLGFI), and 178-198 (NGLLLLPPSAFFLIGLIIWAL).

It belongs to the NqrDE/RnfAE family. Composed of six subunits; NqrA, NqrB, NqrC, NqrD, NqrE and NqrF.

Its subcellular location is the cell inner membrane. It carries out the reaction a ubiquinone + n Na(+)(in) + NADH + H(+) = a ubiquinol + n Na(+)(out) + NAD(+). Functionally, NQR complex catalyzes the reduction of ubiquinone-1 to ubiquinol by two successive reactions, coupled with the transport of Na(+) ions from the cytoplasm to the periplasm. NqrA to NqrE are probably involved in the second step, the conversion of ubisemiquinone to ubiquinol. The chain is Na(+)-translocating NADH-quinone reductase subunit D from Pseudomonas paraeruginosa (strain DSM 24068 / PA7) (Pseudomonas aeruginosa (strain PA7)).